We begin with the raw amino-acid sequence, 345 residues long: Alkaline phosphatase isozyme conversion protein (345 aa).

The signal sequence occupies residues 1–24; that stretch reads MFSALRHRTAALALGVCFILPVHA. Positions 117, 143, 176, and 204 each coordinate Zn(2+).

This sequence belongs to the peptidase M28 family. M28C subfamily.

Functionally, this protein, presumably an aminopeptidase, mediates the conversion of E.coli alkaline phosphatase isozyme 1, to isozymes 2 and 3 by removing, one by one, the two N-terminal arginine residues. This is Alkaline phosphatase isozyme conversion protein (iap) from Escherichia coli (strain K12).